A 379-amino-acid chain; its full sequence is Odorant receptor 33b (379 aa).

Residues 1–37 are Cytoplasmic-facing; that stretch reads MDLKPRVIRSEDIYRTYWLYWHLLGLESNFFLNRLLD. The helical transmembrane segment at 38-58 threads the bilayer; the sequence is LVITIFVTIWYPIHLILGLFM. Residues 59–64 are Extracellular-facing; the sequence is ERSLGD. The chain crosses the membrane as a helical span at residues 65–85; the sequence is VCKGLPITAACFFASFKFICF. Over 86–129 the chain is Cytoplasmic; that stretch reads RFKLSEIKEIEILFKELDQRALSREECEFFNQNTRREANFIWKS. Residues 130-150 traverse the membrane as a helical segment; sequence FIVAYGLSNISAIASVLFGGG. Residues 151–165 are Extracellular-facing; the sequence is HKLLYPAWFPYDVQA. A helical transmembrane segment spans residues 166–186; it reads TELIFWLSVTYQIAGVSLAIL. Residues 187-256 are Cytoplasmic-facing; that stretch reads QNLANDSYPP…LLRSTMNISQ (70 aa). A helical transmembrane segment spans residues 257-277; the sequence is LGQFISSGVNISITLVNILFF. At 278-281 the chain is on the extracellular side; sequence ADNN. The helical transmembrane segment at 282–302 threads the bilayer; sequence FAITYYGVYFLSMVLELFPCC. Topologically, residues 303-355 are cytoplasmic; sequence YYGTLISVEMNQLTYAIYSSNWMSMNRSYSRILLIFMQLTLAEVQIKAGGMIG. Residues 356–376 form a helical membrane-spanning segment; that stretch reads IGMNAFFATVRLAYSFFTLAM. The Extracellular portion of the chain corresponds to 377-379; the sequence is SLR.

This sequence belongs to the insect chemoreceptor superfamily. Heteromeric odorant receptor channel (TC 1.A.69) family. Or2a subfamily. Interacts with Orco. Complexes exist early in the endomembrane system in olfactory sensory neurons (OSNs), coupling these complexes to the conserved ciliary trafficking pathway. As to expression, expressed in 15 cells in the antenna but not the maxillary palp.

The protein localises to the cell membrane. In terms of biological role, odorant receptor which mediates acceptance or avoidance behavior, depending on its substrates. The odorant receptor repertoire encodes a large collection of odor stimuli that vary widely in identity, intensity, and duration. May form a complex with Orco to form odorant-sensing units, providing sensitive and prolonged odorant signaling and calcium permeability. Involved in the behavioral responses to pentyl acetate and pyrazines. This is Odorant receptor 33b (Or33b) from Drosophila melanogaster (Fruit fly).